The primary structure comprises 366 residues: Tetraacyldisaccharide 4'-kinase (366 aa).

65-72 (TVGGTGKT) contributes to the ATP binding site. Residues 343–366 (AKSTPASGGATGLNKEHQDGQPAA) form a disordered region. The segment covering 356-366 (NKEHQDGQPAA) has biased composition (basic and acidic residues).

It belongs to the LpxK family.

It carries out the reaction a lipid A disaccharide + ATP = a lipid IVA + ADP + H(+). Its pathway is glycolipid biosynthesis; lipid IV(A) biosynthesis; lipid IV(A) from (3R)-3-hydroxytetradecanoyl-[acyl-carrier-protein] and UDP-N-acetyl-alpha-D-glucosamine: step 6/6. Its function is as follows. Transfers the gamma-phosphate of ATP to the 4'-position of a tetraacyldisaccharide 1-phosphate intermediate (termed DS-1-P) to form tetraacyldisaccharide 1,4'-bis-phosphate (lipid IVA). This is Tetraacyldisaccharide 4'-kinase from Cupriavidus pinatubonensis (strain JMP 134 / LMG 1197) (Cupriavidus necator (strain JMP 134)).